We begin with the raw amino-acid sequence, 218 residues long: Elongation factor Ts (218 aa).

An involved in Mg(2+) ion dislocation from EF-Tu region spans residues 82 to 85; it reads TDFV.

The protein belongs to the EF-Ts family.

Its subcellular location is the cytoplasm. In terms of biological role, associates with the EF-Tu.GDP complex and induces the exchange of GDP to GTP. It remains bound to the aminoacyl-tRNA.EF-Tu.GTP complex up to the GTP hydrolysis stage on the ribosome. This Prochlorococcus marinus (strain MIT 9303) protein is Elongation factor Ts.